The chain runs to 538 residues: Efflux pump radE (538 aa).

Basic and acidic residues-rich tracts occupy residues 1–12 (MATSRDFGREPP), 20–35 (EAGH…VSEH), and 65–74 (DPKEEERDPN). Disordered stretches follow at residues 1-35 (MATS…VSEH) and 65-90 (DPKE…PQNW). The next 12 helical transmembrane spans lie at 100–120 (AVLS…APGI), 134–154 (LATF…LVLA), 163–183 (VVIY…CALS), 194–214 (FLCG…IADL), 225–245 (SVWS…GGFL), 253–273 (WIFW…LLVL), 327–347 (PICL…YFMI), 362–382 (EGIV…GVVV), 409–429 (IPPT…YGWT), 436–456 (WAVP…INIS), 482–502 (IFGA…GLGW), and 505–525 (SLLA…FYYG).

Belongs to the major facilitator superfamily.

The protein localises to the cell membrane. Efflux pump that might be required for efficient secretion of radicicol or other secondary metabolies produced by the radicicol gene cluster. The protein is Efflux pump radE of Floropilus chiversii (Chaetomium chiversii).